We begin with the raw amino-acid sequence, 771 residues long: Endoplasmin homolog (771 aa).

An N-terminal signal peptide occupies residues 1–24 (MANSSLLRVVLVALLLLGSVTVSA). N63, D109, and F160 together coordinate ATP. A glycan (N-linked (GlcNAc...) asparagine) is linked at N63. The interval 253 to 282 (TAATPEPAAEEGSLDEGAVEEDPDKEGDTQ) is disordered. Over residues 260-277 (AAEEGSLDEGAVEEDPDK) the composition is skewed to acidic residues. N-linked (GlcNAc...) asparagine glycans are attached at residues N306 and N402. Residues 727-771 (ADDSLLPPDDAEYTVSDTEAEEEEEQPKVDANADEEAEAVGEDDL) are disordered. The span at 758-771 (NADEEAEAVGEDDL) shows a compositional bias: acidic residues. Positions 768-771 (EDDL) match the Prevents secretion from ER motif.

It belongs to the heat shock protein 90 family. Homotetramer.

The protein resides in the endoplasmic reticulum. Functionally, molecular chaperone that functions in the processing and transport of secreted proteins. Required for the synthesis of lipophosphoglycan (LPG), a cell surface glycoconjugate. Necessary for the attachment of the galactosyl residue to the mannose within the phosphoglycan repeats of the nascent LPG chain. Also required for addition of phosphoglycan to acid phosphatase. Not required for normal growth. Has ATPase activity. Binds heparin with micromolar affinity which may facilitate infection of host cells. The chain is Endoplasmin homolog from Leishmania infantum.